The following is a 37-amino-acid chain: MKIRASVRKICDKCRLIRRRGRIIVICSNPRHKQRQG.

It belongs to the bacterial ribosomal protein bL36 family.

Its subcellular location is the plastid. The protein localises to the chloroplast. The sequence is that of Large ribosomal subunit protein bL36c from Coffea arabica (Arabian coffee).